The sequence spans 190 residues: Vespryn-21 (190 aa).

A signal peptide spans 1-20 (MLLFTLCFFADLENGGKALA). Residues 21–127 (SPPGKWQKAD…LIWQRGLWFL (107 aa)) enclose the B30.2/SPRY domain. The propeptide occupies 128–190 (QRLETDSDKL…LGGGVSLTNL (63 aa)).

Belongs to the ohanin/vespryn family. In terms of tissue distribution, expressed by the venom gland.

Its subcellular location is the secreted. Neurotoxin that produces dose-dependent hypolocomotion and hyperalgesia in mice. May directly act on the central nervous system, as it is 6500-fold more potent when administered intracerebroventricularly than intraperitoneal. This is Vespryn-21 from Drysdalia coronoides (White-lipped snake).